A 311-amino-acid chain; its full sequence is Malate dehydrogenase (311 aa).

Residues 7-13 and D34 each bind NAD(+); that span reads GAAGGIG. Substrate contacts are provided by R81 and R87. Residues N94 and 117–119 each bind NAD(+); that span reads ITN. Positions 119 and 153 each coordinate substrate. The active-site Proton acceptor is the H177. M227 contacts NAD(+).

The protein belongs to the LDH/MDH superfamily. MDH type 1 family. Homodimer.

It catalyses the reaction (S)-malate + NAD(+) = oxaloacetate + NADH + H(+). Catalyzes the reversible oxidation of malate to oxaloacetate. The sequence is that of Malate dehydrogenase from Shewanella baltica (strain OS223).